The sequence spans 77 residues: UPF0349 protein lmo2392 (77 aa).

Belongs to the UPF0349 family.

This is UPF0349 protein lmo2392 from Listeria monocytogenes serovar 1/2a (strain ATCC BAA-679 / EGD-e).